The chain runs to 465 residues: Putative multidrug resistance protein MdtD (465 aa).

12 helical membrane passes run 12-32 (LWIVAFGFFMQTLDTTIVNTA), 49-69 (SVIVSYVLTVAVMLPASGWLA), 72-92 (IGVKWVFFSAIILFTFGSLMC), 138-158 (FVTLPGQIGPLVGPALGGFLV), 165-185 (WIFLINLPVGVIGALATLLLM), 195-215 (FDISGFIMLAIGMATLTLALD), 219-239 (GLGLSPLAIAGLILCGVIALG), 267-287 (LVGSMSARIGSGMLPFMTPIF), 290-310 (IGLGFSPFHAGLMMIPMIIGS), 329-351 (VLVNATLLLAVVSLSLPLVAIMG), 393-413 (LLSMAMQLSMSIGVSTAGILL), and 430-450 (SAFLYSYLCMAIIIALPALIF).

Belongs to the major facilitator superfamily. TCR/Tet family.

The protein localises to the cell inner membrane. The chain is Putative multidrug resistance protein MdtD from Yersinia pseudotuberculosis serotype I (strain IP32953).